The sequence spans 299 residues: ATP phosphoribosyltransferase (299 aa).

The protein belongs to the ATP phosphoribosyltransferase family. Long subfamily. As to quaternary structure, equilibrium between an active dimeric form, an inactive hexameric form and higher aggregates. Interconversion between the various forms is largely reversible and is influenced by the natural substrates and inhibitors of the enzyme. Requires Mg(2+) as cofactor.

Its subcellular location is the cytoplasm. The enzyme catalyses 1-(5-phospho-beta-D-ribosyl)-ATP + diphosphate = 5-phospho-alpha-D-ribose 1-diphosphate + ATP. The protein operates within amino-acid biosynthesis; L-histidine biosynthesis; L-histidine from 5-phospho-alpha-D-ribose 1-diphosphate: step 1/9. Its activity is regulated as follows. Feedback inhibited by histidine. In terms of biological role, catalyzes the condensation of ATP and 5-phosphoribose 1-diphosphate to form N'-(5'-phosphoribosyl)-ATP (PR-ATP). Has a crucial role in the pathway because the rate of histidine biosynthesis seems to be controlled primarily by regulation of HisG enzymatic activity. This is ATP phosphoribosyltransferase from Pectobacterium carotovorum subsp. carotovorum (strain PC1).